The following is a 320-amino-acid chain: Lipoyl synthase (320 aa).

7 residues coordinate [4Fe-4S] cluster: Cys66, Cys71, Cys77, Cys92, Cys96, Cys99, and Ser306. Residues 77-295 (CFGHGTATFM…AEIGYAMGFS (219 aa)) form the Radical SAM core domain.

It belongs to the radical SAM superfamily. Lipoyl synthase family. The cofactor is [4Fe-4S] cluster.

The protein localises to the cytoplasm. It catalyses the reaction [[Fe-S] cluster scaffold protein carrying a second [4Fe-4S](2+) cluster] + N(6)-octanoyl-L-lysyl-[protein] + 2 oxidized [2Fe-2S]-[ferredoxin] + 2 S-adenosyl-L-methionine + 4 H(+) = [[Fe-S] cluster scaffold protein] + N(6)-[(R)-dihydrolipoyl]-L-lysyl-[protein] + 4 Fe(3+) + 2 hydrogen sulfide + 2 5'-deoxyadenosine + 2 L-methionine + 2 reduced [2Fe-2S]-[ferredoxin]. It functions in the pathway protein modification; protein lipoylation via endogenous pathway; protein N(6)-(lipoyl)lysine from octanoyl-[acyl-carrier-protein]: step 2/2. In terms of biological role, catalyzes the radical-mediated insertion of two sulfur atoms into the C-6 and C-8 positions of the octanoyl moiety bound to the lipoyl domains of lipoate-dependent enzymes, thereby converting the octanoylated domains into lipoylated derivatives. The protein is Lipoyl synthase of Thioalkalivibrio sulfidiphilus (strain HL-EbGR7).